Consider the following 170-residue polypeptide: Calcineurin subunit B type 2 (170 aa).

4 consecutive EF-hand domains span residues 18 to 46 (DEIR…FMSL), 50 to 85 (QQNP…FSVK), 87 to 122 (DKLS…MVGN), and 128 to 163 (QLQQ…TDIH). Ca(2+) contacts are provided by D31, D33, S35, E42, D63, D65, N67, E69, E74, D100, D102, D104, Y106, E111, D141, D143, D145, K147, and E152. Position 35 is a phosphoserine (S35).

The protein belongs to the calcineurin regulatory subunit family. Composed of a catalytic subunit (A) and a regulatory subunit (B). Interacts with sra.

Calcineurin is a calcium-binding and calmodulin-binding protein found in all cells from yeast to mammals, and a calcium-dependent, calmodulin-stimulated protein phosphatase. The chain is Calcineurin subunit B type 2 (CanB2) from Drosophila melanogaster (Fruit fly).